Consider the following 460-residue polypeptide: Ammonium transporter Rh type C (460 aa).

Residues 1–9 (MIWNTNLRW) lie on the Cytoplasmic side of the membrane. Residues 10–30 (RLPVACLLLEVALIALFGVFV) form a helical membrane-spanning segment. The Extracellular portion of the chain corresponds to 31–61 (RYDMDADPHWVQEKVIKNLSTDLENEFYYRY). N-linked (GlcNAc...) asparagine glycosylation occurs at N48. The chain crosses the membrane as a helical span at residues 62–82 (PSFQDVHVMIFVGFGFLMTFL). At 83–89 (QRYGYSS) the chain is on the cytoplasmic side. The helical transmembrane segment at 90 to 110 (VGFNFLLAAFGIQWALLMQGW) threads the bilayer. At 111-125 (LQSFDGRYILVDLEN) the chain is on the extracellular side. A helical membrane pass occupies residues 126-145 (LINADFCVGSVCVAFGAVLG). At 146 to 151 (KVSPVQ) the chain is on the cytoplasmic side. The helical transmembrane segment at 152–174 (LLIMTLFQVTLFSINEYILLNLL) threads the bilayer. The Extracellular portion of the chain corresponds to 175–179 (EVKDS). Residues 180–200 (GGSMTIHAFGAYFGLTVAWIL) traverse the membrane as a helical segment. Over 201–219 (YRPNLHLSKERQSSTYHSD) the chain is Cytoplasmic. A helical membrane pass occupies residues 220–240 (LFAMIGTLFLWMYWPSFNSAI). The Extracellular segment spans residues 241 to 251 (SNHGDAQHRAA). Residues 252–272 (INTYCSLAACVLTSVALSSAL) form a helical membrane-spanning segment. The Cytoplasmic portion of the chain corresponds to 273-285 (HRKGKLDMVHIQN). Residues 286–303 (ATLAGGVGLGTVAELMVL) form a helical membrane-spanning segment. Residues 304–306 (PFG) are Extracellular-facing. Residues 307–329 (SLIIGFVCGIVSTLGFVYLTPFL) traverse the membrane as a helical segment. Topologically, residues 330–346 (ESRLHIQDTCGVHNLHG) are cytoplasmic. The chain crosses the membrane as a helical span at residues 347–367 (IPGIIGGIAGAVTASIANIDL). The Extracellular portion of the chain corresponds to 368 to 396 (YGEEGLAYAFGIERSKLNWSPNMQGRFQA). A helical transmembrane segment spans residues 397 to 417 (AGLFVSLAMALVGGVIVGVIL). Over 418–460 (RLPFWGQAPDENCFEDAVYWEIPKEPKSTALRSEDSSIKPPEP) the chain is Cytoplasmic.

It belongs to the ammonium transporter (TC 2.A.49) family. Rh subfamily. In terms of assembly, homotrimer. In terms of processing, N-glycosylated.

It is found in the apical cell membrane. The catalysed reaction is NH4(+)(in) = NH4(+)(out). The enzyme catalyses methylamine(out) = methylamine(in). It catalyses the reaction CO2(out) = CO2(in). Functionally, ammonium transporter involved in the maintenance of acid-base homeostasis. Transports ammonium and its related derivative methylammonium across the plasma membrane of epithelial cells likely contributing to renal transepithelial ammonia transport and ammonia metabolism. Postulated to primarily mediate an electroneutral bidirectional transport of NH3 ammonia species according to a mechanism that implies interaction of an NH4(+) ion with acidic residues of the pore entry followed by dissociation of NH4(+) into NH3 and H(+). As a result NH3 transits through the central pore and is protonated on the extracellular side reforming NH4(+). May act as a CO2 channel providing for renal acid secretion. The chain is Ammonium transporter Rh type C (RHCG) from Bos taurus (Bovine).